The primary structure comprises 178 residues: Large ribosomal subunit protein bL25 (178 aa).

This sequence belongs to the bacterial ribosomal protein bL25 family. CTC subfamily. As to quaternary structure, part of the 50S ribosomal subunit; part of the 5S rRNA/L5/L18/L25 subcomplex. Contacts the 5S rRNA. Binds to the 5S rRNA independently of L5 and L18.

This is one of the proteins that binds to the 5S RNA in the ribosome where it forms part of the central protuberance. This Helicobacter hepaticus (strain ATCC 51449 / 3B1) protein is Large ribosomal subunit protein bL25.